A 122-amino-acid chain; its full sequence is Large ribosomal subunit protein uL14 (122 aa).

It belongs to the universal ribosomal protein uL14 family. As to quaternary structure, part of the 50S ribosomal subunit. Forms a cluster with proteins L3 and L19. In the 70S ribosome, L14 and L19 interact and together make contacts with the 16S rRNA in bridges B5 and B8.

Functionally, binds to 23S rRNA. Forms part of two intersubunit bridges in the 70S ribosome. This chain is Large ribosomal subunit protein uL14, found in Clostridium botulinum (strain 657 / Type Ba4).